We begin with the raw amino-acid sequence, 180 residues long: Mitochondrial inner membrane protease subunit 2 (180 aa).

The chain crosses the membrane as a helical span at residues 19 to 39 (LVGITLWVPVLMFVEQHVVSV). Active-site residues include Ser46 and Lys92.

It belongs to the peptidase S26 family. IMP2 subfamily. As to quaternary structure, heterodimer of 2 subunits, imp1 and imp2.

The protein localises to the mitochondrion inner membrane. Its function is as follows. Catalyzes the removal of transit peptides required for the targeting of proteins from the mitochondrial matrix, across the inner membrane, into the inter-membrane space. The chain is Mitochondrial inner membrane protease subunit 2 from Schizosaccharomyces pombe (strain 972 / ATCC 24843) (Fission yeast).